A 247-amino-acid polypeptide reads, in one-letter code: tRNA pseudouridine synthase A (247 aa).

The active-site Nucleophile is Asp-53. Residue Tyr-111 coordinates substrate.

It belongs to the tRNA pseudouridine synthase TruA family. As to quaternary structure, homodimer.

The enzyme catalyses uridine(38/39/40) in tRNA = pseudouridine(38/39/40) in tRNA. In terms of biological role, formation of pseudouridine at positions 38, 39 and 40 in the anticodon stem and loop of transfer RNAs. The chain is tRNA pseudouridine synthase A from Bacillus velezensis (strain DSM 23117 / BGSC 10A6 / LMG 26770 / FZB42) (Bacillus amyloliquefaciens subsp. plantarum).